Here is a 1403-residue protein sequence, read N- to C-terminus: DNA-directed RNA polymerase subunit beta' (1403 aa).

Zn(2+)-binding residues include cysteine 70, cysteine 72, cysteine 85, and cysteine 88. Mg(2+)-binding residues include aspartate 460, aspartate 462, and aspartate 464. Residues cysteine 814, cysteine 888, cysteine 895, and cysteine 898 each contribute to the Zn(2+) site. The interval 1369–1403 (RRKRRMLEQPESLTADTGTSHYGEDEISESGAATA) is disordered. Polar residues predominate over residues 1379–1388 (ESLTADTGTS).

Belongs to the RNA polymerase beta' chain family. As to quaternary structure, the RNAP catalytic core consists of 2 alpha, 1 beta, 1 beta' and 1 omega subunit. When a sigma factor is associated with the core the holoenzyme is formed, which can initiate transcription. It depends on Mg(2+) as a cofactor. The cofactor is Zn(2+).

It catalyses the reaction RNA(n) + a ribonucleoside 5'-triphosphate = RNA(n+1) + diphosphate. DNA-dependent RNA polymerase catalyzes the transcription of DNA into RNA using the four ribonucleoside triphosphates as substrates. The chain is DNA-directed RNA polymerase subunit beta' from Nitrosococcus oceani (strain ATCC 19707 / BCRC 17464 / JCM 30415 / NCIMB 11848 / C-107).